A 242-amino-acid polypeptide reads, in one-letter code: Pyridoxine 5'-phosphate synthase (242 aa).

Asn-7 contacts 3-amino-2-oxopropyl phosphate. Residue 9 to 10 (DH) participates in 1-deoxy-D-xylulose 5-phosphate binding. Residue Arg-18 participates in 3-amino-2-oxopropyl phosphate binding. The active-site Proton acceptor is the His-44. The 1-deoxy-D-xylulose 5-phosphate site is built by Arg-46 and His-51. Glu-71 functions as the Proton acceptor in the catalytic mechanism. Thr-101 is a binding site for 1-deoxy-D-xylulose 5-phosphate. The active-site Proton donor is His-192. 3-amino-2-oxopropyl phosphate is bound by residues Gly-193 and 214–215 (GH).

Belongs to the PNP synthase family. Homooctamer; tetramer of dimers.

It is found in the cytoplasm. The enzyme catalyses 3-amino-2-oxopropyl phosphate + 1-deoxy-D-xylulose 5-phosphate = pyridoxine 5'-phosphate + phosphate + 2 H2O + H(+). It functions in the pathway cofactor biosynthesis; pyridoxine 5'-phosphate biosynthesis; pyridoxine 5'-phosphate from D-erythrose 4-phosphate: step 5/5. In terms of biological role, catalyzes the complicated ring closure reaction between the two acyclic compounds 1-deoxy-D-xylulose-5-phosphate (DXP) and 3-amino-2-oxopropyl phosphate (1-amino-acetone-3-phosphate or AAP) to form pyridoxine 5'-phosphate (PNP) and inorganic phosphate. The polypeptide is Pyridoxine 5'-phosphate synthase (Synechocystis sp. (strain ATCC 27184 / PCC 6803 / Kazusa)).